We begin with the raw amino-acid sequence, 182 residues long: ATP synthase subunit delta (182 aa).

This sequence belongs to the ATPase delta chain family. F-type ATPases have 2 components, F(1) - the catalytic core - and F(0) - the membrane proton channel. F(1) has five subunits: alpha(3), beta(3), gamma(1), delta(1), epsilon(1). F(0) has three main subunits: a(1), b(2) and c(10-14). The alpha and beta chains form an alternating ring which encloses part of the gamma chain. F(1) is attached to F(0) by a central stalk formed by the gamma and epsilon chains, while a peripheral stalk is formed by the delta and b chains.

The protein resides in the cell membrane. Functionally, f(1)F(0) ATP synthase produces ATP from ADP in the presence of a proton or sodium gradient. F-type ATPases consist of two structural domains, F(1) containing the extramembraneous catalytic core and F(0) containing the membrane proton channel, linked together by a central stalk and a peripheral stalk. During catalysis, ATP synthesis in the catalytic domain of F(1) is coupled via a rotary mechanism of the central stalk subunits to proton translocation. This protein is part of the stalk that links CF(0) to CF(1). It either transmits conformational changes from CF(0) to CF(1) or is implicated in proton conduction. The protein is ATP synthase subunit delta of Lachnoclostridium phytofermentans (strain ATCC 700394 / DSM 18823 / ISDg) (Clostridium phytofermentans).